Reading from the N-terminus, the 577-residue chain is MGKLIKLITTLTVLVSLLQYCCEFNSGSISCERTQTLCHYTNPRVWNTYFSRNCELYKNKVSPGFDIVARKYDTAVKPVIDDATVKVNKVAIQPAFKVIHSQCKKWNCGKYYQLVRSPMVKTRRFFFAKYNAFVKPNIDKFFTAEFRSHLKERILKCKNIGHYYFTITSRCIKSKYDFIVGNTEEKLMGKFKNKDTHGIHGSVTHEPSSEDMVLTVSTMESDEEELTTTSTQTVVETITLDQEEASAVANHAHDDEASTDVEDSTDVNVNEQALLQEDFDMWSETILQKTQDVIQLFEKDVSKYIHGKLVEEANHFKAKFQSLDDKSKKFFSKISLAINDIECVEGIDSETGKKIFFDKSGSTEISQYITRELVREYFNETRSTLDELTNAMEKDLSEITDEIEKKVNAIREENVEVFEEWGDIIVNEWSKRMAYVDVINAHMGADDDTTLDEEKAKSSVNWKKFLKGKKQIIESRDKLAHHSADLSRVNAFRQKVQKKILSFTQESGEFLYILRSKANLQFQERERKERERKEREKAAAEEFQRQQELLLQQEEEDEEDVSYTSTSTITTTTTMTL.

Residues 1-23 form the signal peptide; that stretch reads MGKLIKLITTLTVLVSLLQYCCE. Coiled coils occupy residues 379–416 and 513–561; these read NETRSTLDELTNAMEKDLSEITDEIEKKVNAIREENVE and ILRS…EEDV. Residues 525 to 545 show a composition bias toward basic and acidic residues; sequence RERKERERKEREKAAAEEFQR. Positions 525–577 are disordered; the sequence is RERKERERKEREKAAAEEFQRQQELLLQQEEEDEEDVSYTSTSTITTTTTMTL. Over residues 562-577 the composition is skewed to low complexity; sequence SYTSTSTITTTTTMTL.

It belongs to the SHE10 family. As to quaternary structure, component of the mitochondria-localized RNase mitochondrial RNA-processing (RNase MRP) composed of one single RNA encoded by the NME1 gene and at least 31 proteins. Absent in the nucleus-localized RNase MRP (NuMRP).

It is found in the mitochondrion. In terms of biological role, involved in spore wall assembly. May be a component of the mitochondrial RNase MRP (MtMRP), a ribonucleoprotein endoribonuclease involved in the cleaving RNA transcripts to generate primers for DNA replication in mitochondria. The protein is Outer spore wall assembly protein SHE10 of Saccharomyces cerevisiae (strain RM11-1a) (Baker's yeast).